We begin with the raw amino-acid sequence, 270 residues long: Expansin-B10 (270 aa).

Residues 1 to 31 (MAVNVRTMWSSMRAQVAMVVALVFLVRGAWC) form the signal peptide. N-linked (GlcNAc...) asparagine glycosylation occurs at Asn41. Residues 70-176 (GGGCGYKDVN…RRVKCKYDSK (107 aa)) enclose the Expansin-like EG45 domain. Cystine bridges form between Cys73–Cys101, Cys104–Cys171, and Cys109–Cys115. The 82-residue stretch at 188–269 (NYLALLVKYV…NWKANTAYTA (82 aa)) folds into the Expansin-like CBD domain.

It belongs to the expansin family. Expansin B subfamily. As to expression, expressed in pollen.

The protein localises to the secreted. It localises to the cell wall. Its subcellular location is the membrane. In terms of biological role, may aid fertilization by loosening the cell wall of the stigma and style, thereby facilitating penetration of the pollen tube. Acts selectively on grass cell walls, which are relatively poor in pectins and xyloglucans and rich in glucuronoarabinoxylans and (1-3),(1-4)-beta-D-glucans, when compared with cell walls of other angiosperms, including other monocots. The protein is Expansin-B10 (EXPB10) of Zea mays (Maize).